Reading from the N-terminus, the 231-residue chain is 7-cyano-7-deazaguanine synthase (231 aa).

8 to 18 provides a ligand contact to ATP; that stretch reads FSGGQDSTTCL. The Zn(2+) site is built by C188, C197, C200, and C203.

Belongs to the QueC family. Requires Zn(2+) as cofactor.

It catalyses the reaction 7-carboxy-7-deazaguanine + NH4(+) + ATP = 7-cyano-7-deazaguanine + ADP + phosphate + H2O + H(+). It functions in the pathway purine metabolism; 7-cyano-7-deazaguanine biosynthesis. Functionally, catalyzes the ATP-dependent conversion of 7-carboxy-7-deazaguanine (CDG) to 7-cyano-7-deazaguanine (preQ(0)). In Shigella flexneri serotype 5b (strain 8401), this protein is 7-cyano-7-deazaguanine synthase.